Here is a 492-residue protein sequence, read N- to C-terminus: N-succinylglutamate 5-semialdehyde dehydrogenase (492 aa).

220 to 225 (GSANTG) contacts NAD(+). Active-site residues include E243 and C277.

The protein belongs to the aldehyde dehydrogenase family. AstD subfamily.

The enzyme catalyses N-succinyl-L-glutamate 5-semialdehyde + NAD(+) + H2O = N-succinyl-L-glutamate + NADH + 2 H(+). It functions in the pathway amino-acid degradation; L-arginine degradation via AST pathway; L-glutamate and succinate from L-arginine: step 4/5. In terms of biological role, catalyzes the NAD-dependent reduction of succinylglutamate semialdehyde into succinylglutamate. In Escherichia coli (strain SE11), this protein is N-succinylglutamate 5-semialdehyde dehydrogenase.